The following is a 353-amino-acid chain: Protein RecA (353 aa).

Position 80 to 87 (80 to 87 (GPESSGKT)) interacts with ATP.

This sequence belongs to the RecA family.

Its subcellular location is the cytoplasm. Functionally, can catalyze the hydrolysis of ATP in the presence of single-stranded DNA, the ATP-dependent uptake of single-stranded DNA by duplex DNA, and the ATP-dependent hybridization of homologous single-stranded DNAs. It interacts with LexA causing its activation and leading to its autocatalytic cleavage. This is Protein RecA from Chlorobium chlorochromatii (strain CaD3).